Reading from the N-terminus, the 440-residue chain is Xaa-Pro dipeptidase (440 aa).

The Mn(2+) site is built by aspartate 244, aspartate 255, histidine 335, glutamate 380, and glutamate 419.

The protein belongs to the peptidase M24B family. Bacterial-type prolidase subfamily. Mn(2+) is required as a cofactor.

It carries out the reaction Xaa-L-Pro dipeptide + H2O = an L-alpha-amino acid + L-proline. In terms of biological role, splits dipeptides with a prolyl residue in the C-terminal position. In Shewanella baltica (strain OS223), this protein is Xaa-Pro dipeptidase.